Reading from the N-terminus, the 395-residue chain is Putative phosphatidate cytidylyltransferase (395 aa).

9 helical membrane-spanning segments follow: residues 13–33 (STVF…SAFA), 78–98 (FAFG…MNWE), 115–135 (SLLS…VIYF), 144–164 (WIWT…YMIS), 177–197 (IYSL…YFSV), 201–221 (WTTI…AYLF), 242–262 (AFFG…LYSI), 306–326 (FYIY…IFAI), and 358–378 (FDSS…AGIS).

The protein belongs to the CDS family.

It localises to the cell membrane. The enzyme catalyses a 1,2-diacyl-sn-glycero-3-phosphate + CTP + H(+) = a CDP-1,2-diacyl-sn-glycerol + diphosphate. The protein operates within phospholipid metabolism; CDP-diacylglycerol biosynthesis; CDP-diacylglycerol from sn-glycerol 3-phosphate: step 3/3. This is Putative phosphatidate cytidylyltransferase (cdsA) from Mycoplasma pneumoniae (strain ATCC 29342 / M129 / Subtype 1) (Mycoplasmoides pneumoniae).